We begin with the raw amino-acid sequence, 121 residues long: Large ribosomal subunit protein uL18 (121 aa).

It belongs to the universal ribosomal protein uL18 family. In terms of assembly, part of the 50S ribosomal subunit; part of the 5S rRNA/L5/L18/L25 subcomplex. Contacts the 5S and 23S rRNAs.

Its function is as follows. This is one of the proteins that bind and probably mediate the attachment of the 5S RNA into the large ribosomal subunit, where it forms part of the central protuberance. This Streptococcus equi subsp. zooepidemicus (strain MGCS10565) protein is Large ribosomal subunit protein uL18.